Consider the following 207-residue polypeptide: Large ribosomal subunit protein bL25 (207 aa).

The disordered stretch occupies residues 171-207; the sequence is ESVVTVEVPEDATESTTAPEAAAAPADAAAAPAADAK. A compositionally biased stretch (low complexity) spans 184-207; sequence ESTTAPEAAAAPADAAAAPAADAK.

The protein belongs to the bacterial ribosomal protein bL25 family. CTC subfamily. As to quaternary structure, part of the 50S ribosomal subunit; part of the 5S rRNA/L5/L18/L25 subcomplex. Contacts the 5S rRNA. Binds to the 5S rRNA independently of L5 and L18.

Functionally, this is one of the proteins that binds to the 5S RNA in the ribosome where it forms part of the central protuberance. The sequence is that of Large ribosomal subunit protein bL25 from Bifidobacterium longum subsp. infantis (strain ATCC 15697 / DSM 20088 / JCM 1222 / NCTC 11817 / S12).